Reading from the N-terminus, the 496-residue chain is Cytochrome c-552 (496 aa).

The signal sequence occupies residues 1–23 (MKKYKFLFAISIIAIGLMTVLLA). His-100 is a binding site for heme c. Heme is bound by residues Cys-128, Cys-131, and Lys-132. 6 residues coordinate heme c: Cys-166, Cys-169, His-170, Cys-210, Cys-213, and His-214. Positions 216, 217, 269, and 271 each coordinate Ca(2+). Tyr-217 provides a ligand contact to substrate. His-272 serves as a coordination point for substrate. Heme c-binding residues include His-283, Cys-290, Cys-293, His-294, His-308, Cys-321, Cys-324, His-325, and His-400.

The protein belongs to the cytochrome c-552 family. Requires Ca(2+) as cofactor. The cofactor is heme c.

It is found in the periplasm. It carries out the reaction 6 Fe(III)-[cytochrome c] + NH4(+) + 2 H2O = 6 Fe(II)-[cytochrome c] + nitrite + 8 H(+). The protein operates within nitrogen metabolism; nitrate reduction (assimilation). In terms of biological role, catalyzes the reduction of nitrite to ammonia, consuming six electrons in the process. The chain is Cytochrome c-552 from Aliarcobacter butzleri (strain RM4018) (Arcobacter butzleri).